We begin with the raw amino-acid sequence, 238 residues long: Flagellar L-ring protein (238 aa).

The N-terminal stretch at 1–16 is a signal peptide; sequence MRKLILISLCIFFLAS. Residue C17 is the site of N-palmitoyl cysteine attachment. C17 carries S-diacylglycerol cysteine lipidation.

It belongs to the FlgH family. As to quaternary structure, the basal body constitutes a major portion of the flagellar organelle and consists of four rings (L,P,S, and M) mounted on a central rod.

It is found in the cell outer membrane. The protein resides in the bacterial flagellum basal body. In terms of biological role, assembles around the rod to form the L-ring and probably protects the motor/basal body from shearing forces during rotation. This is Flagellar L-ring protein from Thermodesulfovibrio yellowstonii (strain ATCC 51303 / DSM 11347 / YP87).